Here is a 336-residue protein sequence, read N- to C-terminus: Protein SphX (336 aa).

The N-terminal stretch at 1-27 is a signal peptide; sequence MFDLSRLSRGIVPMALLLLGISACTPS.

Belongs to the PstS family.

Functionally, may be involved in the system for phosphate transport across the cytoplasmic membrane. In Synechocystis sp. (strain ATCC 27184 / PCC 6803 / Kazusa), this protein is Protein SphX (sphX).